A 412-amino-acid polypeptide reads, in one-letter code: Inositol polyphosphate-5-phosphatase A (412 aa).

Cys409 is lipidated: S-farnesyl cysteine. A propeptide spans Val410–Gln412 (removed in mature form).

Belongs to the inositol 1,4,5-trisphosphate 5-phosphatase type I family. In terms of assembly, interacts with TASOR. Isoprenylation at Cys-409 is required for localization at the membrane. In terms of tissue distribution, expressed at high levels in cerebellar Purkinje cells (at protein level). Expressed in Sertoli cells of the testis.

It is found in the cell membrane. The protein resides in the cell projection. Its subcellular location is the dendrite. It carries out the reaction 1D-myo-inositol 1,4,5-trisphosphate + H2O = 1D-myo-inositol 1,4-bisphosphate + phosphate. The enzyme catalyses 1D-myo-inositol 1,3,4,5-tetrakisphosphate + H2O = 1D-myo-inositol 1,3,4-trisphosphate + phosphate. In terms of biological role, phosphatase that specifically hydrolyzes the 5-phosphate of inositol 1,4,5-trisphosphate to inositol 1,4-bisphosphate, and inositol 1,3,4,5-tetrasphosphate to inositol 1,3,4-trisphosphate. Plays a crucial role in the survival of cerebellar Purkinje cells. The polypeptide is Inositol polyphosphate-5-phosphatase A (Inpp5a) (Mus musculus (Mouse)).